The following is a 134-amino-acid chain: Translation initiation factor 2 subunit beta (134 aa).

This sequence belongs to the eIF-2-beta/eIF-5 family. In terms of assembly, heterotrimer composed of an alpha, a beta and a gamma chain.

Functionally, eIF-2 functions in the early steps of protein synthesis by forming a ternary complex with GTP and initiator tRNA. This is Translation initiation factor 2 subunit beta from Pyrobaculum neutrophilum (strain DSM 2338 / JCM 9278 / NBRC 100436 / V24Sta) (Thermoproteus neutrophilus).